Reading from the N-terminus, the 519-residue chain is Acetylcholine receptor subunit gamma (519 aa).

The signal sequence occupies residues 1–22; that stretch reads MHGGQGPQLLLLLLATCLGAQS. Topologically, residues 23–240 are extracellular; sequence RNQEERLLAD…VVFYLLIQRK (218 aa). 2 N-linked (GlcNAc...) asparagine glycosylation sites follow: Asn-52 and Asn-163. Cys-150 and Cys-164 are oxidised to a cystine. 3 helical membrane-spanning segments follow: residues 241–265, 274–292, and 308–329; these read PLFY…IYFL, CTVA…FLVA, and YLTF…VLNV. The Cytoplasmic segment spans residues 330–476; that stretch reads SLRSPHTHSM…WLLVGRVLDR (147 aa). A helical transmembrane segment spans residues 477–497; that stretch reads VCFLAMLSLFICGTAGIFLMA.

It belongs to the ligand-gated ion channel (TC 1.A.9) family. Acetylcholine receptor (TC 1.A.9.1) subfamily. Gamma/CHRNG sub-subfamily. As to quaternary structure, pentamer of two alpha chains, and one each of the beta, delta, and gamma (in immature muscle) or epsilon (in mature muscle) chains.

It is found in the postsynaptic cell membrane. Its subcellular location is the cell membrane. It catalyses the reaction K(+)(in) = K(+)(out). The enzyme catalyses Na(+)(in) = Na(+)(out). After binding acetylcholine, the AChR responds by an extensive change in conformation that affects all subunits and leads to opening of an ion-conducting channel across the plasma membrane. The sequence is that of Acetylcholine receptor subunit gamma (Chrng) from Rattus norvegicus (Rat).